A 430-amino-acid polypeptide reads, in one-letter code: Histidine--tRNA ligase (430 aa).

The protein belongs to the class-II aminoacyl-tRNA synthetase family. In terms of assembly, homodimer.

The protein resides in the cytoplasm. It carries out the reaction tRNA(His) + L-histidine + ATP = L-histidyl-tRNA(His) + AMP + diphosphate + H(+). This Acinetobacter baylyi (strain ATCC 33305 / BD413 / ADP1) protein is Histidine--tRNA ligase.